Here is a 316-residue protein sequence, read N- to C-terminus: Ornithine carbamoyltransferase (316 aa).

Carbamoyl phosphate is bound by residues 57-60 (STRT), glutamine 84, arginine 108, and 135-138 (HPCQ). Residues asparagine 166, aspartate 230, and 234–235 (SM) each bind L-ornithine. Carbamoyl phosphate-binding positions include 269-270 (CL) and arginine 297.

It belongs to the aspartate/ornithine carbamoyltransferase superfamily. OTCase family.

The protein localises to the cytoplasm. The enzyme catalyses carbamoyl phosphate + L-ornithine = L-citrulline + phosphate + H(+). It participates in amino-acid biosynthesis; L-arginine biosynthesis; L-arginine from L-ornithine and carbamoyl phosphate: step 1/3. Its function is as follows. Reversibly catalyzes the transfer of the carbamoyl group from carbamoyl phosphate (CP) to the N(epsilon) atom of ornithine (ORN) to produce L-citrulline. This chain is Ornithine carbamoyltransferase, found in Bacillus cereus (strain ZK / E33L).